A 221-amino-acid chain; its full sequence is 2-amino-5-formylamino-6-ribosylaminopyrimidin-4(3H)-one 5'-monophosphate deformylase (221 aa).

4 residues coordinate Fe cation: glutamate 29, histidine 31, aspartate 40, and histidine 108.

This sequence belongs to the creatininase superfamily. FAPy deformylase family. In terms of assembly, homodimer. Fe(2+) is required as a cofactor. The cofactor is Zn(2+).

The enzyme catalyses 2-amino-5-formylamino-6-(5-phospho-D-ribosylamino)pyrimidin-4(3H)-one + H2O = 2,5-diamino-6-(1-D-ribosylamino)pyrimidin-4(3H)-one 5'-phosphate + formate + H(+). It functions in the pathway cofactor biosynthesis; coenzyme F420 biosynthesis. It participates in cofactor biosynthesis; riboflavin biosynthesis. In terms of biological role, catalyzes the hydrolysis of the formamide of 2-amino-5-formylamino-6-ribosylamino-4(3H)-pyrimidinone 5'-monophosphate (FAPy) to form 2,5-diamino-6-ribosylamino-4(3H)-pyrimidinone 5'-phosphate (APy). The protein is 2-amino-5-formylamino-6-ribosylaminopyrimidin-4(3H)-one 5'-monophosphate deformylase of Methanococcus maripaludis (strain C7 / ATCC BAA-1331).